Consider the following 235-residue polypeptide: Large ribosomal subunit protein bL25 (235 aa).

Disordered stretches follow at residues 1–21 and 210–235; these read MADN…PARR and APAA…GAKK. Residues 210 to 222 are compositionally biased toward low complexity; that stretch reads APAAGAAPAAGGE. Basic and acidic residues predominate over residues 223-235; sequence AAKKAPEAKGAKK.

The protein belongs to the bacterial ribosomal protein bL25 family. CTC subfamily. In terms of assembly, part of the 50S ribosomal subunit; part of the 5S rRNA/L5/L18/L25 subcomplex. Contacts the 5S rRNA. Binds to the 5S rRNA independently of L5 and L18.

Its function is as follows. This is one of the proteins that binds to the 5S RNA in the ribosome where it forms part of the central protuberance. In Anaeromyxobacter sp. (strain Fw109-5), this protein is Large ribosomal subunit protein bL25.